The chain runs to 164 residues: MAKPQVFFDLQANGENLGRIVMELRADVVPKTAENFRALCTGEKGFGYKGSTFHRVIPGFMCQGGDFTRHNGTGGKSIYGEKFADENFTLKHTQPGILSMANAGVNTNGSQFFICTAVTSWLDGKHVVFGAVTQGLDIIKKVESYGSDSGKTSKKITIADCGQL.

Residues 7 to 163 (FFDLQANGEN…KKITIADCGQ (157 aa)) enclose the PPIase cyclophilin-type domain.

This sequence belongs to the cyclophilin-type PPIase family. PPIase A subfamily.

Its subcellular location is the cytoplasm. The catalysed reaction is [protein]-peptidylproline (omega=180) = [protein]-peptidylproline (omega=0). Its activity is regulated as follows. Binds cyclosporin A (CsA). CsA mediates some of its effects via an inhibitory action on PPIase. PPIases accelerate the folding of proteins. It catalyzes the cis-trans isomerization of proline imidic peptide bonds in oligopeptides. The protein is Peptidyl-prolyl cis-trans isomerase of Hemicentrotus pulcherrimus (Sea urchin).